The sequence spans 304 residues: Sulfotransferase 1C3 (304 aa).

56–61 (KSGTTW) provides a ligand contact to 3'-phosphoadenylyl sulfate. 115–117 (KTH) contacts substrate. The active-site Proton acceptor is the His-117. Residues Arg-139, Ser-147, Tyr-202, 236 to 241 (TSFDVM), and 264 to 268 (FMRKG) each bind 3'-phosphoadenylyl sulfate.

The protein belongs to the sulfotransferase 1 family. Not detectable in any of the tissues tested. As to expression, expressed in the small intestine.

The protein localises to the cytoplasm. The catalysed reaction is an alcohol + 3'-phosphoadenylyl sulfate = an alkyl sulfate + adenosine 3',5'-bisphosphate + H(+). The enzyme catalyses a phenol + 3'-phosphoadenylyl sulfate = an aryl sulfate + adenosine 3',5'-bisphosphate + H(+). It catalyses the reaction lithocholate + 3'-phosphoadenylyl sulfate = lithocholate sulfate + adenosine 3',5'-bisphosphate + H(+). In terms of biological role, sulfotransferase that utilizes 3'-phospho-5'-adenylyl sulfate (PAPS) as sulfonate donor. Has sulfotransferase activity towards various substrates, such as bile acids, thyroid hormones and toward xenobiotic compounds such as chloro phenols and hydroxypyrenes. Lithocholic acid appears to be the best substrate among the endogenous compounds tested and 3,3',5,5'-tetrachloro-4,4'-biphenyldiol shows the highest specific activity among the xenobiotic compounds. Functionally, exhibits weak sulphating activity and only toward chloro phenols (pentachlorophenol and 3,3',5,5'-tetrachloro-4,4'-biphenyldiol). This chain is Sulfotransferase 1C3 (SULT1C3), found in Homo sapiens (Human).